The sequence spans 643 residues: Ecto-NOX disulfide-thiol exchanger 1 (643 aa).

An RRM domain is found at 142–221; it reads KTVFVGGLPE…GRLHVDFAQA (80 aa). Coiled-coil stretches lie at residues 307 to 342 and 425 to 570; these read VQSA…LTGI and QAYA…EALL.

This sequence belongs to the ENOX family. Cu cation is required as a cofactor. As to expression, expressed in lymphocyte cells, breast and breast cancer (at protein level). Found in the sera of cancer patients with a wide variety of cancers including breast, prostate, lung and ovarian cancers, leukemias, and lymphomas. Found also in the serum of healthy volunteers or patients with disorders other than cancer. Probably shed into serum by cancer cells.

The protein localises to the cell membrane. It is found in the secreted. Its subcellular location is the extracellular space. Its activity is regulated as follows. Not inhibited by the antitumor sulfonylurea LY181984, the vabilloid capsaicin, and retinoids. In terms of biological role, probably acts as a terminal oxidase of plasma electron transport from cytosolic NAD(P)H via hydroquinones to acceptors at the cell surface. Hydroquinone oxidase activity alternates with a protein disulfide-thiol interchange/oxidoreductase activity which may control physical membrane displacements associated with vesicle budding or cell enlargement. The activities oscillate with a period length of 24 minutes and play a role in control of the ultradian cellular biological clock. This Homo sapiens (Human) protein is Ecto-NOX disulfide-thiol exchanger 1 (ENOX1).